The sequence spans 120 residues: rRNA-processing protein CGR1 (120 aa).

Disordered stretches follow at residues 1–26 and 81–120; these read MVNE…KAEK and ERRE…LKER. Residues 47-106 are a coiled coil; sequence KKQKRLEDKQFKERLKALKDEKEEARQAKITMLKERREKKEENERYERLAAKMHAKKVER. The segment covering 81 to 96 has biased composition (basic and acidic residues); sequence ERREKKEENERYERLA. Positions 97–113 are enriched in basic residues; it reads AKMHAKKVERMRRREKR.

Belongs to the CGR1 family.

It is found in the nucleus. Its subcellular location is the nucleolus. Functionally, involved in nucleolar integrity and required for processing of the pre-rRNA for the 60S ribosome subunit. This chain is rRNA-processing protein CGR1 (CGR1), found in Saccharomyces cerevisiae (strain ATCC 204508 / S288c) (Baker's yeast).